The following is a 111-amino-acid chain: Large ribosomal subunit protein uL22 (111 aa).

This sequence belongs to the universal ribosomal protein uL22 family. Part of the 50S ribosomal subunit.

This protein binds specifically to 23S rRNA; its binding is stimulated by other ribosomal proteins, e.g. L4, L17, and L20. It is important during the early stages of 50S assembly. It makes multiple contacts with different domains of the 23S rRNA in the assembled 50S subunit and ribosome. Functionally, the globular domain of the protein is located near the polypeptide exit tunnel on the outside of the subunit, while an extended beta-hairpin is found that lines the wall of the exit tunnel in the center of the 70S ribosome. This Chlamydia trachomatis serovar L2 (strain ATCC VR-902B / DSM 19102 / 434/Bu) protein is Large ribosomal subunit protein uL22.